Consider the following 427-residue polypeptide: MSVSFENKETNRGVLTFTISQDQIKPELDRVFKSVKKSLNVPGFRKGHLPRPIFDKKFGEESLYQDVMNALLPNAYEAAVKEAGLEVVAQPKIDVTSMEKGQDWVITAEVVTKPEVKLGDYKNLEVSVDVEKEVTDADVEERIERERNNLAELVIKEAAAENGDTVVIDFVGSIDGVEFDGGKGENFSLGLGSGQFIPGFEDQLVGHSAGETVDVIVTFPEDYQAEDLAGKEAKFVTTIHEVKAKEVPALDDELAKDIDEEVETLADLKEKYRKELATAKEEAYKDAVEGAAIDTAVENAEIVELPEEMIHEEVHRSVNEFLGNLQRQGINPDMYFQITGTTQEDLHNQYQAEAESRTKTNLVIEAVAKAEGFDASEEEIQKEVEQLAADYNMEVAQVQNLLSADMLKHDITIKKAVELITSTATVK.

A PPIase FKBP-type domain is found at 163–248 (GDTVVIDFVG…IHEVKAKEVP (86 aa)).

It belongs to the FKBP-type PPIase family. Tig subfamily.

It is found in the cytoplasm. It carries out the reaction [protein]-peptidylproline (omega=180) = [protein]-peptidylproline (omega=0). Involved in protein export. Acts as a chaperone by maintaining the newly synthesized protein in an open conformation. Functions as a peptidyl-prolyl cis-trans isomerase. This chain is Trigger factor, found in Streptococcus pneumoniae (strain 70585).